The following is a 286-amino-acid chain: Dioxygenase trt7 (286 aa).

Fe cation contacts are provided by His129, Asp131, and His206.

It belongs to the PhyH family. As to quaternary structure, homodimer. Fe cation is required as a cofactor.

It participates in secondary metabolite biosynthesis; terpenoid biosynthesis. In terms of biological role, dioxygenase; part of the gene cluster that mediates the biosynthesis of terretonin, a fungal meroterpenoid that acts as a mycotoxin. The first step of the pathway is the synthesis of 3,5-dimethylorsellinic acid (DMOA) by the polyketide synthase trt4. DMOA is then prenylated into farnesyl-DMOA by the polyprenyl transferase trt2. Methylation by the methyltransferase trt5 then leads to farnesyl-DMOA methyl ester which is further subject to epoxidation by the FAD-dependent monooxygenase trt8 to yield epoxyfarnesyl-DMOA methyl ester. Cyclization of epoxyfarnesyl-DMOA methyl ester by the terpene cyclase trt1 leads to a tetracycle intermediate which is in turn converted to preterretonin. Dehydrogenase trt9 comes next to transform preterretonin to preterrenoid. The FAD-dependent monooxygenase trt3 is then required for the C-hydroxylation at C16 of preterrenoid to yield terrenoid. The cytochrome P450 trt6 catalyzes three successive oxidations to transform terrenoid into an unstable intermediate, which then undergoes the D-ring expansion and unusual rearrangement of the methoxy group to afford the core skeleton of terretonin. Trt14 catalyzes the D-ring expansion of terretonin involving intramolecular methoxy rearrangement as well as the hydrolysis of the expanded D-ring and the methyl ester moiety. Finally, the nonheme iron-dependent dioxygenase trt7 accomplishes the last two oxidation reactions steps to complete the biosynthesis of terretonin. Terretonin C is produced via spontaneous decarboxylation of the terretonin precursor. Another shunt product of the terretonin biosynthesis is dihydrofarnesyl-DMOA, derived from epoxyfarnesyl-DMOA through hydrolysis of the epoxide. The chain is Dioxygenase trt7 from Aspergillus terreus (strain NIH 2624 / FGSC A1156).